The following is a 122-amino-acid chain: Large ribosomal subunit protein uL14 (122 aa).

This sequence belongs to the universal ribosomal protein uL14 family. As to quaternary structure, part of the 50S ribosomal subunit. Forms a cluster with proteins L3 and L19. In the 70S ribosome, L14 and L19 interact and together make contacts with the 16S rRNA in bridges B5 and B8.

Binds to 23S rRNA. Forms part of two intersubunit bridges in the 70S ribosome. The polypeptide is Large ribosomal subunit protein uL14 (Endomicrobium trichonymphae).